A 506-amino-acid chain; its full sequence is GTPase Der (506 aa).

2 consecutive EngA-type G domains span residues 3–166 (PVVA…GEQL) and 218–391 (IKIA…ACAT). Residues 9–16 (GRPNVGKS), 56–60 (DTGGI), 118–121 (NKTD), 224–231 (GRPNVGKS), 271–275 (DTAGV), and 336–339 (NKWD) each bind GTP. One can recognise a KH-like domain in the interval 392–476 (QKNSTSMLTR…PIRIQFQEGN (85 aa)).

The protein belongs to the TRAFAC class TrmE-Era-EngA-EngB-Septin-like GTPase superfamily. EngA (Der) GTPase family. In terms of assembly, associates with the 50S ribosomal subunit.

Its function is as follows. GTPase that plays an essential role in the late steps of ribosome biogenesis. The protein is GTPase Der of Actinobacillus pleuropneumoniae serotype 7 (strain AP76).